A 513-amino-acid chain; its full sequence is Interferon alpha/beta receptor 2 (513 aa).

The signal sequence occupies residues 1–21; it reads MRSRCTVSAVGLLSLCLVVSA. Residues 22–242 lie on the Extracellular side of the membrane; sequence SLETITPSAF…GQESGLSESA (221 aa). Intrachain disulfides connect Cys-39–Cys-123 and Cys-85–Cys-93. 5 N-linked (GlcNAc...) asparagine glycosylation sites follow: Asn-42, Asn-58, Asn-65, Asn-78, and Asn-84. N-linked (GlcNAc...) asparagine glycans are attached at residues Asn-149, Asn-191, and Asn-195. Cys-210 and Cys-227 are disulfide-bonded. Residues 243 to 263 form a helical membrane-spanning segment; that stretch reads IVGITTSCLVVMVFVSTIVML. The Cytoplasmic portion of the chain corresponds to 264 to 513; the sequence is KRIGYICLKD…ADVGDGYIMR (250 aa). Residues 334-402 form a disordered region; that stretch reads GYTMHGLTGK…DPTGPYERRK (69 aa). At Tyr-335 the chain carries Phosphotyrosine. Residues 344 to 354 show a composition bias toward polar residues; sequence PLQQTSDTSAS. The span at 377–389 shows a compositional bias: low complexity; it reads GAEPELPTEAGAG. At Ser-403 the chain carries Phosphoserine. The mediates interaction with STAT2 (and required for the recruitment of USP18) stretch occupies residues 421–444; that stretch reads GDNIIFNVNLNSVFLRVLHDEDAS. Phosphoserine is present on residues Ser-448 and Ser-465. Positions 458–513 are disordered; the sequence is EGPQRTESDLRIAGGDRTQPPLPSLPSQDLWTEDGSSEKSDTSDSDADVGDGYIMR. Position 510 is a phosphotyrosine (Tyr-510).

It belongs to the type II cytokine receptor family. Heterodimer with IFNAR1; forming the receptor for type I interferon. Interacts with the transcriptional factors STAT1 and STAT2. Interacts with JAK1. Interacts with USP18; indirectly via STAT2, it negatively regulates the assembly of the ternary interferon-IFNAR1-IFNAR2 complex and therefore type I interferon signaling. Phosphorylated on tyrosine residues upon interferon binding. Phosphorylation at Tyr-335 or Tyr-510 are sufficient to mediate interferon dependent activation of STAT1, STAT2 and STAT3 leading to antiproliferative effects on many different cell types. Widely expressed. Detected in liver, testis, kidney, salivary gland, thymus, brain, lung and placenta. Isoform 1, isoform 2 and isoform 3 are expressed in brain.

The protein resides in the cell membrane. It is found in the secreted. In terms of biological role, together with IFNAR1, forms the heterodimeric receptor for type I interferons (including interferons alpha, beta, epsilon, omega and kappa). Type I interferon binding activates the JAK-STAT signaling cascade, resulting in transcriptional activation or repression of interferon-regulated genes that encode the effectors of the interferon response. Mechanistically, type I interferon-binding brings the IFNAR1 and IFNAR2 subunits into close proximity with one another, driving their associated Janus kinases (JAKs) (TYK2 bound to IFNAR1 and JAK1 bound to IFNAR2) to cross-phosphorylate one another. The activated kinases phosphorylate specific tyrosine residues on the intracellular domains of IFNAR1 and IFNAR2, forming docking sites for the STAT transcription factors (STAT1, STAT2 and STAT). STAT proteins are then phosphorylated by the JAKs, promoting their translocation into the nucleus to regulate expression of interferon-regulated genes. Functionally, may be potent inhibitors of type I IFN receptor activity. The polypeptide is Interferon alpha/beta receptor 2 (Ifnar2) (Mus musculus (Mouse)).